A 445-amino-acid chain; its full sequence is Phosphoglucosamine mutase (445 aa).

The active-site Phosphoserine intermediate is the S99. 4 residues coordinate Mg(2+): S99, D242, D244, and D246. Residue S99 is modified to Phosphoserine.

The protein belongs to the phosphohexose mutase family. Requires Mg(2+) as cofactor. Activated by phosphorylation.

The catalysed reaction is alpha-D-glucosamine 1-phosphate = D-glucosamine 6-phosphate. In terms of biological role, catalyzes the conversion of glucosamine-6-phosphate to glucosamine-1-phosphate. This is Phosphoglucosamine mutase from Campylobacter jejuni subsp. jejuni serotype O:23/36 (strain 81-176).